A 338-amino-acid chain; its full sequence is Ketol-acid reductoisomerase (NADP(+)) (338 aa).

A KARI N-terminal Rossmann domain is found at Met-1–Thr-181. Residues Tyr-24 to Gln-27, Arg-47, and Ser-52 each bind NADP(+). The active site involves His-107. Residue Gly-133 participates in NADP(+) binding. Residues Asn-182–Ile-327 form the KARI C-terminal knotted domain. Residues Asp-190, Glu-194, Glu-226, and Glu-230 each contribute to the Mg(2+) site. Ser-251 contributes to the substrate binding site.

Belongs to the ketol-acid reductoisomerase family. Mg(2+) is required as a cofactor.

The enzyme catalyses (2R)-2,3-dihydroxy-3-methylbutanoate + NADP(+) = (2S)-2-acetolactate + NADPH + H(+). It catalyses the reaction (2R,3R)-2,3-dihydroxy-3-methylpentanoate + NADP(+) = (S)-2-ethyl-2-hydroxy-3-oxobutanoate + NADPH + H(+). It participates in amino-acid biosynthesis; L-isoleucine biosynthesis; L-isoleucine from 2-oxobutanoate: step 2/4. The protein operates within amino-acid biosynthesis; L-valine biosynthesis; L-valine from pyruvate: step 2/4. In terms of biological role, involved in the biosynthesis of branched-chain amino acids (BCAA). Catalyzes an alkyl-migration followed by a ketol-acid reduction of (S)-2-acetolactate (S2AL) to yield (R)-2,3-dihydroxy-isovalerate. In the isomerase reaction, S2AL is rearranged via a Mg-dependent methyl migration to produce 3-hydroxy-3-methyl-2-ketobutyrate (HMKB). In the reductase reaction, this 2-ketoacid undergoes a metal-dependent reduction by NADPH to yield (R)-2,3-dihydroxy-isovalerate. The protein is Ketol-acid reductoisomerase (NADP(+)) of Polynucleobacter necessarius subsp. necessarius (strain STIR1).